Consider the following 97-residue polypeptide: Large ribosomal subunit protein uL23 (97 aa).

Belongs to the universal ribosomal protein uL23 family. As to quaternary structure, part of the 50S ribosomal subunit. Contacts protein L29, and trigger factor when it is bound to the ribosome.

One of the early assembly proteins it binds 23S rRNA. One of the proteins that surrounds the polypeptide exit tunnel on the outside of the ribosome. Forms the main docking site for trigger factor binding to the ribosome. This chain is Large ribosomal subunit protein uL23, found in Allorhizobium ampelinum (strain ATCC BAA-846 / DSM 112012 / S4) (Agrobacterium vitis (strain S4)).